The sequence spans 444 residues: Structure-specific endonuclease subunit SLX1 (444 aa).

Residues 23-105 (AFSCCYLLRS…QNTKVSRHAD (83 aa)) enclose the GIY-YIG domain. The SLX1-type zinc finger occupies 240–295 (CGVCKQRLILQHDIIAVCSHSSCHCAAHLSCLSSHFLKDKDSDSELVPREGTCPTC). Residues 324–354 (RRQRAGTPKGQGLKSVRGRGHSEDENESDAL) are disordered.

This sequence belongs to the SLX1 family. As to quaternary structure, forms a heterodimer with SLX4. A divalent metal cation is required as a cofactor.

The protein resides in the nucleus. Functionally, catalytic subunit of the SLX1-SLX4 structure-specific endonuclease that resolves DNA secondary structures generated during DNA repair and recombination. Has endonuclease activity towards branched DNA substrates, introducing single-strand cuts in duplex DNA close to junctions with ss-DNA. This Paracoccidioides lutzii (strain ATCC MYA-826 / Pb01) (Paracoccidioides brasiliensis) protein is Structure-specific endonuclease subunit SLX1.